Reading from the N-terminus, the 113-residue chain is Hydrogenase maturation factor HypA (113 aa).

H2 contacts Ni(2+). Zn(2+)-binding residues include C73, C76, C89, and C92.

The protein belongs to the HypA/HybF family.

Functionally, involved in the maturation of [NiFe] hydrogenases. Required for nickel insertion into the metal center of the hydrogenase. The protein is Hydrogenase maturation factor HypA of Rhodobacter capsulatus (Rhodopseudomonas capsulata).